The primary structure comprises 258 residues: Regulatory protein RecX (258 aa).

This sequence belongs to the RecX family.

The protein localises to the cytoplasm. Functionally, modulates RecA activity. This chain is Regulatory protein RecX, found in Streptococcus gordonii (strain Challis / ATCC 35105 / BCRC 15272 / CH1 / DL1 / V288).